The chain runs to 347 residues: Gas vesicle ATPase GvpN (347 aa).

Residues 1 to 50 (MTNSSRERKVRGSQIRTSRREKQDKNARNRTEKELTRLENHQTHRTKNGT) are disordered. Residues 18-42 (SRREKQDKNARNRTEKELTRLENHQ) are compositionally biased toward basic and acidic residues. Residue 91 to 98 (GPTGCGKT) coordinates ATP.

It belongs to the CbbQ/NirQ/NorQ/GpvN family. Forms homodimers, a GvpN-GvpO heterodimer, interacts with GvpC and GvpL, might interact with GvpA.

The protein localises to the gas vesicle. It is found in the cytoplasm. It catalyses the reaction ATP + H2O = ADP + phosphate + H(+). Functionally, an ATPase that functions in gas vesicle formation. A minor component of the gas vesicle, also found in soluble extracts. Gas vesicles are hollow, gas filled proteinaceous nanostructures found in some microorganisms. They allow positioning of halobacteria at the optimal depth for growth in the poorly aerated, shallow brine pools of their habitat. Expression of a 9.5 kb mc-vac DNA fragment containing 2 divergently transcribed regions (gvpD-gvpE-gvpF-gvpG-gvpH-gvpI-gvpJ-gvpK-gvpL-gvpM and gvpA-gvpC-gvpN-gvpO) allows H.volcanii to produce gas vesicles. The chain is Gas vesicle ATPase GvpN from Haloferax mediterranei (strain ATCC 33500 / DSM 1411 / JCM 8866 / NBRC 14739 / NCIMB 2177 / R-4) (Halobacterium mediterranei).